A 1915-amino-acid polypeptide reads, in one-letter code: Cysteine repeat modular protein 2 (1915 aa).

The first 23 residues, Met1 to Ala23, serve as a signal peptide directing secretion. 5 FU repeats span residues Leu53–Val98, Ser104–Gln151, Gln161–Lys208, Asn210–Val263, and Thr267–Gln315. A glycan (N-linked (GlcNAc...) asparagine) is linked at Asn138. Residues Asn274, Asn279, and Asn316 are each glycosylated (N-linked (GlcNAc...) asparagine). 5 FU repeats span residues Ser317–Thr362, Gln373–Tyr422, Thr427–Gln492, Asn496–Asn546, and Thr554–Met602. Asn409 carries N-linked (GlcNAc...) asparagine glycosylation. Residues Asn496, Asn572, Asn603, and Asn621 are each glycosylated (N-linked (GlcNAc...) asparagine). 3 FU repeats span residues Thr606 to Asn639, Tyr640 to Val686, and Gln690 to Leu739. Residue Asn742 is glycosylated (N-linked (GlcNAc...) asparagine). FU repeat units lie at residues Asp760–Tyr814 and Asn818–Gln865. 5 N-linked (GlcNAc...) asparagine glycosylation sites follow: Asn909, Asn930, Asn1051, Asn1085, and Asn1193. The region spanning Val1184–Glu1224 is the EGF-like domain. 3 disulfide bridges follow: Cys1188–Cys1200, Cys1194–Cys1212, and Cys1214–Cys1223. Asn1250, Asn1297, Asn1519, Asn1546, Asn1554, Asn1580, and Asn1596 each carry an N-linked (GlcNAc...) asparagine glycan. 5 consecutive transmembrane segments (helical) span residues Leu1599 to Ile1619, Tyr1662 to Leu1682, Ser1704 to Phe1724, Gly1763 to Phe1783, and Phe1796 to Ile1816. Asn1867 is a glycosylation site (N-linked (GlcNAc...) asparagine).

It localises to the membrane. Functionally, required for mucocyst secretion. The sequence is that of Cysteine repeat modular protein 2 from Tetrahymena thermophila (strain SB210).